We begin with the raw amino-acid sequence, 498 residues long: Glutamate--tRNA ligase (498 aa).

Residues 11–21 carry the 'HIGH' region motif; that stretch reads PSPTGHLHIGN. A 'KMSKS' region motif is present at residues 260–264; sequence KLSKR. Position 263 (K263) interacts with ATP.

Belongs to the class-I aminoacyl-tRNA synthetase family. Glutamate--tRNA ligase type 1 subfamily. In terms of assembly, monomer.

The protein localises to the cytoplasm. It carries out the reaction tRNA(Glu) + L-glutamate + ATP = L-glutamyl-tRNA(Glu) + AMP + diphosphate. Its function is as follows. Catalyzes the attachment of glutamate to tRNA(Glu) in a two-step reaction: glutamate is first activated by ATP to form Glu-AMP and then transferred to the acceptor end of tRNA(Glu). The chain is Glutamate--tRNA ligase from Leuconostoc mesenteroides subsp. mesenteroides (strain ATCC 8293 / DSM 20343 / BCRC 11652 / CCM 1803 / JCM 6124 / NCDO 523 / NBRC 100496 / NCIMB 8023 / NCTC 12954 / NRRL B-1118 / 37Y).